The following is a 281-amino-acid chain: 4-diphosphocytidyl-2-C-methyl-D-erythritol kinase (281 aa).

Lys15 is a catalytic residue. Residue 98-108 (PTGAGLGGGSS) participates in ATP binding. Asp140 is a catalytic residue.

It belongs to the GHMP kinase family. IspE subfamily.

The enzyme catalyses 4-CDP-2-C-methyl-D-erythritol + ATP = 4-CDP-2-C-methyl-D-erythritol 2-phosphate + ADP + H(+). The protein operates within isoprenoid biosynthesis; isopentenyl diphosphate biosynthesis via DXP pathway; isopentenyl diphosphate from 1-deoxy-D-xylulose 5-phosphate: step 3/6. In terms of biological role, catalyzes the phosphorylation of the position 2 hydroxy group of 4-diphosphocytidyl-2C-methyl-D-erythritol. The chain is 4-diphosphocytidyl-2-C-methyl-D-erythritol kinase from Neisseria meningitidis serogroup C (strain 053442).